Consider the following 109-residue polypeptide: uncharacterized protein (109 aa).

The first 22 residues, 1–22 (MKPYSTLFLFTLLTLTTVPAQA), serve as a signal peptide directing secretion. Residues 39-109 (AYNPDHGRDY…ERRMEDEYGQ (71 aa)) are disordered. Over residues 41-109 (NPDHGRDYED…ERRMEDEYGQ (69 aa)) the composition is skewed to basic and acidic residues.

This is an uncharacterized protein from Shigella dysenteriae serotype 1 (strain Sd197).